The following is a 424-amino-acid chain: Tol-Pal system protein TolB (424 aa).

A signal peptide spans 1–16 (MKQLLVLILSLYTTLA).

It belongs to the TolB family. In terms of assembly, the Tol-Pal system is composed of five core proteins: the inner membrane proteins TolA, TolQ and TolR, the periplasmic protein TolB and the outer membrane protein Pal. They form a network linking the inner and outer membranes and the peptidoglycan layer.

It is found in the periplasm. Part of the Tol-Pal system, which plays a role in outer membrane invagination during cell division and is important for maintaining outer membrane integrity. The polypeptide is Tol-Pal system protein TolB (Ruthia magnifica subsp. Calyptogena magnifica).